Here is a 352-residue protein sequence, read N- to C-terminus: MTQISERLLVQAHLDAKQPKPLTAEEEAFYRREIAAELKKQNAVLVAHYYCDPVIQALAEETGGCVSDSLEMARFGNQHPAQTVVVAGVKFMGETAKILNPEKRVLMPTLEATCSLDLGCPVDEFSAFCDQHPERTVVVYANTSAAVKARADWVVTSSCALEIVESLMDNGETIIWAPDKHLGNYIQRETGADMLLWDGACIVHEEFKSKQLLDMKALYPDAAILVHPESPQSVVELADAVGSTSQLIKAAQTLPNSTFIVATDRGIFYKMQQLCPDKTFIEAPTAGNGAACRSCAHCPWMAMNTLERVLTGLRQGSGEIHVDPALIPKAIKPLKRMLDFTQAARMKVAGNA.

2 residues coordinate iminosuccinate: H48 and S69. Position 114 (C114) interacts with [4Fe-4S] cluster. Iminosuccinate is bound by residues Y140–N142 and S157. C201 is a binding site for [4Fe-4S] cluster. Residues H227–E229 and T244 contribute to the iminosuccinate site. Residue C298 participates in [4Fe-4S] cluster binding.

Belongs to the quinolinate synthase family. Type 1 subfamily. The cofactor is [4Fe-4S] cluster.

It is found in the cytoplasm. The catalysed reaction is iminosuccinate + dihydroxyacetone phosphate = quinolinate + phosphate + 2 H2O + H(+). It participates in cofactor biosynthesis; NAD(+) biosynthesis; quinolinate from iminoaspartate: step 1/1. In terms of biological role, catalyzes the condensation of iminoaspartate with dihydroxyacetone phosphate to form quinolinate. This chain is Quinolinate synthase, found in Ectopseudomonas mendocina (strain ymp) (Pseudomonas mendocina).